Here is a 31-residue protein sequence, read N- to C-terminus: Cytochrome b6-f complex subunit 6 (31 aa).

The chain crosses the membrane as a helical span at residues 4–24 (ITSYFGFLLAALTITSALFIG).

The protein belongs to the PetL family. In terms of assembly, the 4 large subunits of the cytochrome b6-f complex are cytochrome b6, subunit IV (17 kDa polypeptide, PetD), cytochrome f and the Rieske protein, while the 4 small subunits are PetG, PetL, PetM and PetN. The complex functions as a dimer.

The protein resides in the plastid. It is found in the chloroplast thylakoid membrane. Functionally, component of the cytochrome b6-f complex, which mediates electron transfer between photosystem II (PSII) and photosystem I (PSI), cyclic electron flow around PSI, and state transitions. PetL is important for photoautotrophic growth as well as for electron transfer efficiency and stability of the cytochrome b6-f complex. This chain is Cytochrome b6-f complex subunit 6, found in Coffea arabica (Arabian coffee).